Reading from the N-terminus, the 555-residue chain is Disabled homolog 1 (555 aa).

The tract at residues 1–26 is disordered; the sequence is MSTETELQVAVKTSAKKDSRKKGQDR. Residues 15–26 are compositionally biased toward basic and acidic residues; that stretch reads AKKDSRKKGQDR. Residues 36-189 form the PID domain; that stretch reads KGEGVRYKAK…CEQAVYQTIL (154 aa). A phosphotyrosine mark is found at tyrosine 198, tyrosine 220, and tyrosine 232. Disordered regions lie at residues 386 to 409 and 469 to 555; these read PLAT…PRQK and LTPV…QDGS. The segment covering 391–403 has biased composition (polar residues); that stretch reads PGTNDSARSSPQS. 2 stretches are compositionally biased toward low complexity: residues 470–479 and 490–501; these read TPVTSTTPST and SSPSKSSASHVS. Serine 491 carries the phosphoserine; by CDK5 modification. Residues 504-513 are compositionally biased toward acidic residues; that stretch reads TADDIFEEGF.

Associates with the SH2 domains of SRC, FYN and ABL. Interacts (phosphorylated on tyrosine residues) with CRK and CRKL (via respective SH2 domain). Interacts with SIAH1, LRP8 and VLDLR. Interacts with LRP1. Interacts with APLP1 (via NPXY motif). Interacts with DAB2IP. Interacts with ZSWIM8. In terms of processing, phosphorylated by FYN on Tyr-198 and Tyr-220 upon reelin induction in embryonic neurons. Also phosphorylated on Ser-491 independently of reelin signaling. Ubiquitinated by various cullin-5-RING E3 ubiquitin-protein ligase complexes (ECS complexes) following ligand-binding and phosphorylation, leading to its degradation. Ubiquitinated by the ECS(SOCS7) complex in the cortical plate of the developing cerebral cortex following ligand-binding and phosphorylation by FYN, leading to its degradation by the proteasome. Recognized by ZSWIM8 through a disorder targets misorder mechanism that eliminates misfolded DAB1 via ubiquitination and proteasomal degradation.

The protein resides in the cytoplasm. Functionally, signaling adapter of the reelin-mediated signaling pathway, which regulates the migration and differentiation of postmitotic neurons during brain development. Mediates intracellular transduction of Reelin signaling following reelin (RELN)-binding to its receptor: acts by docking proteins through its phosphotyrosine residues and PID domain. The sequence is that of Disabled homolog 1 (Dab1) from Rattus norvegicus (Rat).